Consider the following 193-residue polypeptide: Histone H5 (193 aa).

The segment covering 1 to 11 (TDSPIPAPAPA) has biased composition (pro residues). Disordered regions lie at residues 1–29 (TDSP…HPTY) and 80–193 (GVLK…PKKK). A compositionally biased stretch (basic residues) spans 13-24 (KPKRARAPRKPA). The region spanning 25-98 (SHPTYSEMIA…GASGSFRLAK (74 aa)) is the H15 domain. The segment covering 104–193 (RSPAGRKKKK…SGARKSPKKK (90 aa)) has biased composition (basic residues).

Belongs to the histone H1/H5 family. In terms of tissue distribution, erythroid cells.

It is found in the nucleus. The protein localises to the chromosome. Histone H5 performs the same function as H1, being necessary for the condensation of nucleosome chains into higher order structures, and replaces histone H1 in certain cells. The chain is Histone H5 from Anser anser anser (Western greylag goose).